The chain runs to 100 residues: Large ribosomal subunit protein uL23 (100 aa).

The protein belongs to the universal ribosomal protein uL23 family. As to quaternary structure, part of the 50S ribosomal subunit. Contacts protein L29, and trigger factor when it is bound to the ribosome.

One of the early assembly proteins it binds 23S rRNA. One of the proteins that surrounds the polypeptide exit tunnel on the outside of the ribosome. Forms the main docking site for trigger factor binding to the ribosome. This Mycolicibacterium vanbaalenii (strain DSM 7251 / JCM 13017 / BCRC 16820 / KCTC 9966 / NRRL B-24157 / PYR-1) (Mycobacterium vanbaalenii) protein is Large ribosomal subunit protein uL23.